A 223-amino-acid polypeptide reads, in one-letter code: Phosphoribosylformylglycinamidine synthase subunit PurQ (223 aa).

Residues 2–223 (KIAVVVFPGS…KSLLKAGVQA (222 aa)) form the Glutamine amidotransferase type-1 domain. Cys-86 functions as the Nucleophile in the catalytic mechanism. Active-site residues include His-195 and Glu-197.

In terms of assembly, part of the FGAM synthase complex composed of 1 PurL, 1 PurQ and 2 PurS subunits.

The protein resides in the cytoplasm. It catalyses the reaction N(2)-formyl-N(1)-(5-phospho-beta-D-ribosyl)glycinamide + L-glutamine + ATP + H2O = 2-formamido-N(1)-(5-O-phospho-beta-D-ribosyl)acetamidine + L-glutamate + ADP + phosphate + H(+). It carries out the reaction L-glutamine + H2O = L-glutamate + NH4(+). The protein operates within purine metabolism; IMP biosynthesis via de novo pathway; 5-amino-1-(5-phospho-D-ribosyl)imidazole from N(2)-formyl-N(1)-(5-phospho-D-ribosyl)glycinamide: step 1/2. Functionally, part of the phosphoribosylformylglycinamidine synthase complex involved in the purines biosynthetic pathway. Catalyzes the ATP-dependent conversion of formylglycinamide ribonucleotide (FGAR) and glutamine to yield formylglycinamidine ribonucleotide (FGAM) and glutamate. The FGAM synthase complex is composed of three subunits. PurQ produces an ammonia molecule by converting glutamine to glutamate. PurL transfers the ammonia molecule to FGAR to form FGAM in an ATP-dependent manner. PurS interacts with PurQ and PurL and is thought to assist in the transfer of the ammonia molecule from PurQ to PurL. The sequence is that of Phosphoribosylformylglycinamidine synthase subunit PurQ from Lactobacillus acidophilus (strain ATCC 700396 / NCK56 / N2 / NCFM).